Reading from the N-terminus, the 173-residue chain is Co-chaperone protein HscB homolog (173 aa).

The region spanning 5–77 (CHYALFDLQP…PRRARYLLAI (73 aa)) is the J domain.

The protein belongs to the HscB family. As to quaternary structure, interacts with HscA and stimulates its ATPase activity.

Its function is as follows. Co-chaperone involved in the maturation of iron-sulfur cluster-containing proteins. Seems to help targeting proteins to be folded toward HscA. The chain is Co-chaperone protein HscB homolog from Pseudomonas entomophila (strain L48).